A 311-amino-acid polypeptide reads, in one-letter code: Lipoyl synthase (311 aa).

7 residues coordinate [4Fe-4S] cluster: C47, C52, C58, C73, C77, C80, and S287. Residues 59–276 (WTKKHATVMI…AQIARAKGFL (218 aa)) form the Radical SAM core domain.

It belongs to the radical SAM superfamily. Lipoyl synthase family. [4Fe-4S] cluster serves as cofactor.

It is found in the cytoplasm. It catalyses the reaction [[Fe-S] cluster scaffold protein carrying a second [4Fe-4S](2+) cluster] + N(6)-octanoyl-L-lysyl-[protein] + 2 oxidized [2Fe-2S]-[ferredoxin] + 2 S-adenosyl-L-methionine + 4 H(+) = [[Fe-S] cluster scaffold protein] + N(6)-[(R)-dihydrolipoyl]-L-lysyl-[protein] + 4 Fe(3+) + 2 hydrogen sulfide + 2 5'-deoxyadenosine + 2 L-methionine + 2 reduced [2Fe-2S]-[ferredoxin]. The protein operates within protein modification; protein lipoylation via endogenous pathway; protein N(6)-(lipoyl)lysine from octanoyl-[acyl-carrier-protein]: step 2/2. Functionally, catalyzes the radical-mediated insertion of two sulfur atoms into the C-6 and C-8 positions of the octanoyl moiety bound to the lipoyl domains of lipoate-dependent enzymes, thereby converting the octanoylated domains into lipoylated derivatives. The protein is Lipoyl synthase of Sphingopyxis alaskensis (strain DSM 13593 / LMG 18877 / RB2256) (Sphingomonas alaskensis).